Consider the following 313-residue polypeptide: Olfactory receptor 1J1 (313 aa).

Residues 1 to 25 are Extracellular-facing; that stretch reads MRLKNHSSVSEFLLLGFPIRPEQGG. A glycan (N-linked (GlcNAc...) asparagine) is linked at Asn-5. A helical membrane pass occupies residues 26-46; the sequence is IFFSLFLAMYLITVLGNLLII. Over 47–57 the chain is Cytoplasmic; that stretch reads LLIRLDSHLHT. A helical membrane pass occupies residues 58–78; it reads PMYFFLSHLAFTDISFSSVTV. At 79–97 the chain is on the extracellular side; that stretch reads PKMLTKVQNQPIPITYEEC. A disulfide bridge links Cys-97 with Cys-189. Residues 98–118 traverse the membrane as a helical segment; sequence VSQTYFFIFFADLDSFLITSM. Residues 119 to 142 lie on the Cytoplasmic side of the membrane; it reads AYDRYMAICHPLHYITIMSQSRCA. The chain crosses the membrane as a helical span at residues 143–163; that stretch reads MLVAVSWVIASACALLHSLLL. Topologically, residues 164–196 are extracellular; the sequence is DQLSFCADHTVPHFFCDLGALLKLSCSDTSLNQ. Residues 197–217 form a helical membrane-spanning segment; the sequence is LVIFTAGLAAIMLPFLCILIS. Topologically, residues 218–240 are cytoplasmic; sequence YGRIGFTILQVPTTKGICKALST. A helical transmembrane segment spans residues 241–261; that stretch reads CGSHLSVVALYYGSIIGLYFL. Topologically, residues 262-271 are extracellular; it reads PPSNSKINNN. The helical transmembrane segment at 272–292 threads the bilayer; the sequence is IVASVMYTVVTPMLNPFIYSL. Residues 293–313 are Cytoplasmic-facing; the sequence is RNKDMKGALKKLLSKKTEFSK.

The protein belongs to the G-protein coupled receptor 1 family.

Its subcellular location is the cell membrane. Odorant receptor. This chain is Olfactory receptor 1J1, found in Mus musculus (Mouse).